A 67-amino-acid polypeptide reads, in one-letter code: Small ribosomal subunit protein eS17 (67 aa).

Belongs to the eukaryotic ribosomal protein eS17 family. Part of the 30S ribosomal subunit.

The protein is Small ribosomal subunit protein eS17 of Pyrococcus furiosus (strain ATCC 43587 / DSM 3638 / JCM 8422 / Vc1).